Here is a 354-residue protein sequence, read N- to C-terminus: Hyaluronan and proteoglycan link protein 1 (354 aa).

Residues 1–15 (MKSLLLLVLISICGA) constitute a propeptide that is removed on maturation. Residues Asn21 and Asn56 are each glycosylated (N-linked (GlcNAc...) asparagine). In terms of domain architecture, Ig-like V-type spans 38-152 (PRLLVEAEQA…EGLEDDTAVV (115 aa)). 5 cysteine pairs are disulfide-bonded: Cys61–Cys139, Cys181–Cys252, Cys205–Cys226, Cys279–Cys349, and Cys304–Cys325. 2 Link domains span residues 159 to 254 (VVFP…FCFT) and 259 to 351 (GRFY…YCFR).

The protein belongs to the HAPLN family.

The protein localises to the secreted. It localises to the extracellular space. The protein resides in the extracellular matrix. Functionally, stabilizes the aggregates of proteoglycan monomers with hyaluronic acid in the extracellular cartilage matrix. The protein is Hyaluronan and proteoglycan link protein 1 (HAPLN1) of Equus caballus (Horse).